Consider the following 862-residue polypeptide: Genome polyprotein (862 aa).

The N-myristoyl glycine; by host moiety is linked to residue Gly2.

Belongs to the picornaviruses polyprotein family. As to quaternary structure, interacts with capsid protein VP1 and capsid protein VP3 to form heterotrimeric protomers. Interacts with capsid protein VP0, and capsid protein VP3 to form heterotrimeric protomers. Five protomers subsequently associate to form pentamers which serve as building blocks for the capsid. Interacts with capsid protein VP2, capsid protein VP3 and capsid protein VP4 following cleavage of capsid protein VP0. In terms of assembly, interacts with capsid protein VP1 and capsid protein VP3 in the mature capsid. As to quaternary structure, interacts with capsid protein VP0 and capsid protein VP1 to form heterotrimeric protomers. Five protomers subsequently associate to form pentamers which serve as building blocks for the capsid. Interacts with capsid protein VP4 in the mature capsid. Interacts with protein 2C; this interaction may be important for virion morphogenesis. Interacts with capsid protein VP1 and capsid protein VP3. Specific enzymatic cleavages in vivo by the viral proteases yield processing intermediates and the mature proteins. Post-translationally, myristoylation is required for the formation of pentamers during virus assembly. Further assembly of 12 pentamers and a molecule of genomic RNA generates the provirion. In terms of processing, during virion maturation, immature virions are rendered infectious following cleavage of VP0 into VP4 and VP2. This maturation seems to be an autocatalytic event triggered by the presence of RNA in the capsid and it is followed by a conformational change infectious virion. Myristoylation is required during RNA encapsidation and formation of the mature virus particle.

It is found in the virion. The protein localises to the host cytoplasm. Its function is as follows. Forms an icosahedral capsid of pseudo T=3 symmetry with capsid proteins VP2 and VP3. The capsid is 300 Angstroms in diameter, composed of 60 copies of each capsid protein and enclosing the viral positive strand RNA genome. Capsid protein VP1 mainly forms the vertices of the capsid. Capsid protein VP1 interacts with host cell receptor to provide virion attachment to target host cells. This attachment induces virion internalization. Tyrosine kinases are probably involved in the entry process. After binding to its receptor, the capsid undergoes conformational changes. Capsid protein VP1 N-terminus (that contains an amphipathic alpha-helix) and capsid protein VP4 are externalized. Together, they shape a pore in the host membrane through which viral genome is translocated to host cell cytoplasm. Forms an icosahedral capsid of pseudo T=3 symmetry with capsid proteins VP2 and VP3. The capsid is 300 Angstroms in diameter, composed of 60 copies of each capsid protein and enclosing the viral positive strand RNA genome. In terms of biological role, lies on the inner surface of the capsid shell. After binding to the host receptor, the capsid undergoes conformational changes. Capsid protein VP4 is released, Capsid protein VP1 N-terminus is externalized, and together, they shape a pore in the host membrane through which the viral genome is translocated into the host cell cytoplasm. Functionally, component of immature procapsids, which is cleaved into capsid proteins VP4 and VP2 after maturation. Allows the capsid to remain inactive before the maturation step. The protein is Genome polyprotein of Echovirus 16 (strain Harrington).